An 89-amino-acid chain; its full sequence is Small ribosomal subunit protein uS19 (89 aa).

The protein belongs to the universal ribosomal protein uS19 family.

In terms of biological role, protein S19 forms a complex with S13 that binds strongly to the 16S ribosomal RNA. This chain is Small ribosomal subunit protein uS19, found in Xanthomonas campestris pv. campestris (strain 8004).